The following is a 405-amino-acid chain: CMP-sialic acid transporter 3 (405 aa).

At 1 to 39 the chain is on the cytoplasmic side; that stretch reads MKNGIAECPACHSKLVSPGSKTISRAYDDHKIRVSSKQR. The chain crosses the membrane as a helical span at residues 40-60; the sequence is VLNVLLVVGDCMLVGLQPVLV. The Lumenal segment spans residues 61–73; sequence YMSKVDGKFNFSP. A helical membrane pass occupies residues 74–94; it reads ISVNFLTEIAKVIFAIVMLLI. At 95 to 142 the chain is on the cytoplasmic side; it reads QARHQKVGEKPLLSVSTFVQAARNNVLLAVPALLYAINNYLKFTMQLY. The chain crosses the membrane as a helical span at residues 143 to 163; the sequence is FNPATVKMLSNLKVLVIAVLL. The Lumenal portion of the chain corresponds to 164–170; the sequence is KMVMKRR. A helical membrane pass occupies residues 171–191; the sequence is FSIIQWEALALLLIGISVNQL. The Cytoplasmic segment spans residues 192-199; sequence RSLPEGAT. The helical transmembrane segment at 200 to 220 threads the bilayer; that stretch reads AIGIPLATGAYVCTVIFVTVP. At 221–243 the chain is on the lumenal side; sequence SMASVFNEYALKSQYDTSIYLQN. A helical membrane pass occupies residues 244–264; the sequence is LFLYGYGAIFNFLGILGTVIY. At 265–280 the chain is on the cytoplasmic side; sequence KGPGSFDILQGHSRAT. A helical transmembrane segment spans residues 281–301; it reads MFLILNNAAQGILSSFFFKYA. Residues 302-321 are Lumenal-facing; it reads DTILKKYSSTVATIFTGIAS. Residues 322 to 342 form a helical membrane-spanning segment; that stretch reads AALFGHVITMNFLLGISIVFI. Residues 343-405 are Cytoplasmic-facing; it reads SMHQFFSPLA…SDDRTPLLPR (63 aa). The disordered stretch occupies residues 385–405; that stretch reads GANEEASHRGESDDRTPLLPR. The segment covering 389–405 has biased composition (basic and acidic residues); sequence EASHRGESDDRTPLLPR.

Belongs to the nucleotide-sugar transporter family. CMP-Sialate:CMP antiporter (TC 2.A.7.12) subfamily.

It localises to the golgi apparatus membrane. In terms of biological role, sugar transporter involved in the transport of CMP-sialic acid from the cytoplasm into the Golgi. In Arabidopsis thaliana (Mouse-ear cress), this protein is CMP-sialic acid transporter 3 (UTR6).